The chain runs to 116 residues: UPF0654 protein C869.09 (116 aa).

The segment at 32–116 (LKEHGSESHY…LLEEVDDESK (85 aa)) is disordered. Residues 39–48 (SHYTTGTTRG) show a composition bias toward polar residues. Residues 49-64 (QKADADDAGELREEGF) show a composition bias toward basic and acidic residues.

The protein belongs to the UPF0654 (con-6) family.

The protein resides in the cytoplasm. It localises to the nucleus. This Schizosaccharomyces pombe (strain 972 / ATCC 24843) (Fission yeast) protein is UPF0654 protein C869.09.